The sequence spans 157 residues: Putative low molecular weight protein-tyrosine-phosphatase slr0328 (157 aa).

Cys-7 (nucleophile) is an active-site residue. Residue Arg-13 is part of the active site. The active-site Proton donor is the Asp-124.

It belongs to the low molecular weight phosphotyrosine protein phosphatase family.

It catalyses the reaction O-phospho-L-tyrosyl-[protein] + H2O = L-tyrosyl-[protein] + phosphate. This Synechocystis sp. (strain ATCC 27184 / PCC 6803 / Kazusa) protein is Putative low molecular weight protein-tyrosine-phosphatase slr0328.